Here is a 767-residue protein sequence, read N- to C-terminus: 5-methyltetrahydropteroyltriglutamate--homocysteine methyltransferase (767 aa).

Lys126 provides a ligand contact to 5-methyltetrahydropteroyltri-L-glutamate. Residues Ile445–Ser447 and Glu498 each bind L-homocysteine. L-methionine-binding positions include Ile445–Ser447 and Glu498. Residues Arg529–Cys530 and Trp575 contribute to the 5-methyltetrahydropteroyltri-L-glutamate site. Asp613 contacts L-homocysteine. Asp613 provides a ligand contact to L-methionine. Residue Glu619 coordinates 5-methyltetrahydropteroyltri-L-glutamate. 3 residues coordinate Zn(2+): His655, Cys657, and Glu679. Residue His708 is the Proton donor of the active site. A Zn(2+)-binding site is contributed by Cys740.

Belongs to the vitamin-B12 independent methionine synthase family. Zn(2+) is required as a cofactor.

It carries out the reaction 5-methyltetrahydropteroyltri-L-glutamate + L-homocysteine = tetrahydropteroyltri-L-glutamate + L-methionine. Its pathway is amino-acid biosynthesis; L-methionine biosynthesis via de novo pathway; L-methionine from L-homocysteine (MetE route): step 1/1. Its function is as follows. Catalyzes the transfer of a methyl group from 5-methyltetrahydrofolate to homocysteine resulting in methionine formation. This is 5-methyltetrahydropteroyltriglutamate--homocysteine methyltransferase from Psychromonas ingrahamii (strain DSM 17664 / CCUG 51855 / 37).